Reading from the N-terminus, the 156-residue chain is E3 ubiquitin-protein ligase LAP (156 aa).

The RING-CH-type zinc finger occupies 1–55; it reads MSDICWICNDVCDERNNFCGCNEEYKVVHIKCMQLWINYSKKKECNLCKTKYNIK. Residues 1–73 lie on the Cytoplasmic side of the membrane; that stretch reads MSDICWICND…WNWCFNDKKT (73 aa). The Zn(2+) site is built by C5, C8, C19, C21, H29, C32, C45, and C48. Residues 74–94 form a helical membrane-spanning segment; sequence TLFKIFFILFALVFIFLTITL. At 95 to 111 the chain is on the lumenal side; sequence SNDMANLVTGINDLICS. The chain crosses the membrane as a helical span at residues 112–132; the sequence is IIFLIVYTVVMLTSICFSVFV. Residues 133-156 lie on the Cytoplasmic side of the membrane; it reads VAIVVDFLLEAKEKNSFLTIREIV.

This sequence belongs to the poxviridae LAP protein family.

It localises to the host membrane. The protein resides in the host Golgi apparatus. The protein localises to the host trans-Golgi network membrane. Its subcellular location is the host early endosome membrane. It carries out the reaction S-ubiquitinyl-[E2 ubiquitin-conjugating enzyme]-L-cysteine + [acceptor protein]-L-lysine = [E2 ubiquitin-conjugating enzyme]-L-cysteine + N(6)-ubiquitinyl-[acceptor protein]-L-lysine.. In terms of biological role, E3 ubiquitin-protein ligase which promotes ubiquitination and subsequent degradation of host MHC-I and CD4 molecules, presumably to prevent lysis of infected cells by cytotoxic T-lymphocytes and NK cell. Binds target molecules through transmembrane interaction. The result of this ubiquitination is the enhancement of the endocytosis of the target chain and the delivery to the lysosome, where it is proteolytically destroyed. This chain is E3 ubiquitin-protein ligase LAP, found in Yaba-like disease virus (YLDV).